The sequence spans 356 residues: Uroporphyrinogen decarboxylase (356 aa).

Substrate is bound by residues 23–27 (RQAGR), aspartate 72, tyrosine 148, serine 203, and histidine 321.

The protein belongs to the uroporphyrinogen decarboxylase family. Homodimer.

Its subcellular location is the cytoplasm. It carries out the reaction uroporphyrinogen III + 4 H(+) = coproporphyrinogen III + 4 CO2. It functions in the pathway porphyrin-containing compound metabolism; protoporphyrin-IX biosynthesis; coproporphyrinogen-III from 5-aminolevulinate: step 4/4. In terms of biological role, catalyzes the decarboxylation of four acetate groups of uroporphyrinogen-III to yield coproporphyrinogen-III. The chain is Uroporphyrinogen decarboxylase from Chloroflexus aggregans (strain MD-66 / DSM 9485).